We begin with the raw amino-acid sequence, 30 residues long: Dendrotoxin B (30 aa).

Cys3 and Cys22 are joined by a disulfide.

It belongs to the three-finger toxin family. Short-chain subfamily. Orphan group XI sub-subfamily. Contains 4 disulfide bonds. As to expression, expressed by the venom gland.

It is found in the secreted. Blocks voltage-gated potassium channels (Kv). This is the slowly inactivating phase of potassium efflux which is blocked by this toxin. The protein is Dendrotoxin B of Dendroaspis angusticeps (Eastern green mamba).